A 345-amino-acid polypeptide reads, in one-letter code: Protein PXR1 (345 aa).

2 disordered regions span residues 1–25 and 166–317; these read MGLA…SNNN and VEDE…ASRL. In terms of domain architecture, G-patch spans 25 to 71; that stretch reads NNQFGHQYLTKMGWTPGKGIGLVPDSITTHLKINIKTDNAGLGAKLQ. A compositionally biased stretch (basic residues) spans 187-227; the sequence is KKEKKEKKEKKEKKEKKEKKEKKEKKEKKEKKEKKEKKEKK. Over residues 228–237 the composition is skewed to basic and acidic residues; it reads EKKEKSDKKE. A compositionally biased stretch (basic residues) spans 238 to 278; it reads KKEKKDKKEKKEKKEKKEKKEKKEKKEKKEKKEKKEKKEKK. The span at 279-288 shows a compositional bias: basic and acidic residues; the sequence is EKKDKLDKES. Residues 289–312 are compositionally biased toward polar residues; sequence SNAANVESTKSLVSDSSRESTPTP.

The protein belongs to the PINX1 family.

It is found in the nucleus. It localises to the nucleolus. Its function is as follows. Involved in rRNA-processing at A0, A1 and A2 sites and negatively regulates telomerase. This is Protein PXR1 (PXR1) from Lodderomyces elongisporus (strain ATCC 11503 / CBS 2605 / JCM 1781 / NBRC 1676 / NRRL YB-4239) (Yeast).